The sequence spans 190 residues: Vascular endothelial growth factor A (190 aa).

An N-terminal signal peptide occupies residues 1-26; it reads MNFLLSWVHWSLALLLYLHHAKWSQA. Disulfide bonds link cysteine 51-cysteine 93, cysteine 82-cysteine 127, and cysteine 86-cysteine 129. N-linked (GlcNAc...) asparagine glycosylation is present at asparagine 100.

The protein belongs to the PDGF/VEGF growth factor family. Homodimer; disulfide-linked. Also found as heterodimer with PGF. Interacts with NRP1. Interacts with BSG. Interacts with CD82; this interaction inhibits VEGFA-mediated signaling pathway.

It is found in the secreted. Its function is as follows. Growth factor active in angiogenesis, vasculogenesis and endothelial cell growth. Induces endothelial cell proliferation, promotes cell migration, inhibits apoptosis and induces permeabilization of blood vessels. Binds to the FLT1/VEGFR1 and KDR/VEGFR2 receptors, heparan sulfate and heparin. Binding to NRP1 receptor initiates a signaling pathway needed for motor neuron axon guidance and cell body migration, including for the caudal migration of facial motor neurons from rhombomere 4 to rhombomere 6 during embryonic development. Also binds the DEAR/FBXW7-AS1 receptor. This is Vascular endothelial growth factor A (VEGFA) from Bos taurus (Bovine).